Consider the following 290-residue polypeptide: NH(3)-dependent NAD(+) synthetase (290 aa).

33–40 (GVSGGVDS) serves as a coordination point for ATP. Residue aspartate 39 participates in Mg(2+) binding. Arginine 154 is a binding site for deamido-NAD(+). Threonine 174 is a binding site for ATP. A Mg(2+)-binding site is contributed by glutamate 179. Residues lysine 187 and aspartate 194 each contribute to the deamido-NAD(+) site. Residues lysine 203 and serine 225 each coordinate ATP.

Belongs to the NAD synthetase family. Homodimer.

It carries out the reaction deamido-NAD(+) + NH4(+) + ATP = AMP + diphosphate + NAD(+) + H(+). It participates in cofactor biosynthesis; NAD(+) biosynthesis; NAD(+) from deamido-NAD(+) (ammonia route): step 1/1. Functionally, catalyzes the ATP-dependent amidation of deamido-NAD to form NAD. Uses ammonia as a nitrogen source. The polypeptide is NH(3)-dependent NAD(+) synthetase (Thermotoga neapolitana (strain ATCC 49049 / DSM 4359 / NBRC 107923 / NS-E)).